A 765-amino-acid chain; its full sequence is ATP-dependent zinc metalloprotease FtsH (765 aa).

At 1 to 27 (MSNTSNFNERVTENAKPPKNVKSIIWK) the chain is on the cytoplasmic side. Residues 28 to 48 (TIGIIIVMAIIIGLILFYVLP) traverse the membrane as a helical segment. At 49–213 (RNTIANISNI…NVQLPNQSTA (165 aa)) the chain is on the extracellular side. A helical transmembrane segment spans residues 214-234 (ILTQFLTSIIPFVILIVIYIV). Residues 235 to 765 (IARRFSRTMG…EPTASTASSN (531 aa)) are Cytoplasmic-facing. Position 314 to 321 (314 to 321 (GPPGTGKT)) interacts with ATP. His536 contributes to the Zn(2+) binding site. Glu537 is an active-site residue. Residues His540 and Asp615 each contribute to the Zn(2+) site. A compositionally biased stretch (basic and acidic residues) spans 730 to 748 (KAAAEKEEQAEKAKLDHQS). Positions 730–765 (KAAAEKEEQAEKAKLDHQSDSAQPQEEPTASTASSN) are disordered. Over residues 749–765 (DSAQPQEEPTASTASSN) the composition is skewed to polar residues.

This sequence in the central section; belongs to the AAA ATPase family. It in the C-terminal section; belongs to the peptidase M41 family. Homohexamer. Zn(2+) is required as a cofactor.

The protein resides in the cell membrane. Functionally, acts as a processive, ATP-dependent zinc metallopeptidase for both cytoplasmic and membrane proteins. Plays a role in the quality control of integral membrane proteins. This is ATP-dependent zinc metalloprotease FtsH from Mycoplasmoides gallisepticum (strain R(high / passage 156)) (Mycoplasma gallisepticum).